A 390-amino-acid polypeptide reads, in one-letter code: Transforming protein cbl (390 aa).

Residues 1-52 (ASAGGGCRRGPSFSPGSIPSLAAERAPDPPLAMAGNVKKSSGAGGGGSGGSG) are disordered. Positions 42-52 (GAGGGGSGGSG) are enriched in gly residues. Residues 77-205 (PPCTVDKKMV…KGIFPSGLFQ (129 aa)) are 4H. In terms of domain architecture, Cbl-PTB spans 77–381 (PPCTVDKKMV…GRNQNPDLTG (305 aa)). Residues 206–278 (GDTFRITKAD…FEFDIFTRLF (73 aa)) are EF-hand-like. Residues Asp259, Thr261, Asn263, Tyr265, and Glu270 each contribute to the Ca(2+) site. The tract at residues 279–381 (QPWSSLLRNW…GRNQNPDLTG (103 aa)) is SH2-like. Arg324 lines the 4-O-phospho-L-tyrosine pocket.

Induces early B-lineage lymphomas. The polypeptide is Transforming protein cbl (V-CBL) (Mus musculus (Mouse)).